The chain runs to 155 residues: UPF0178 protein RHE_CH02229 (155 aa).

Belongs to the UPF0178 family.

The sequence is that of UPF0178 protein RHE_CH02229 from Rhizobium etli (strain ATCC 51251 / DSM 11541 / JCM 21823 / NBRC 15573 / CFN 42).